Reading from the N-terminus, the 505-residue chain is MSSIDRSQSVGGTRTYEVRTYGCQMNVHDSERLAGLLEDAGYVRAPEGSDGDADVVVFNTCAVRENADNKLYGNLGHLAPKKARRPGMQIAVGGCLAQKDRDTIVKRAPWVDVVFGTHNIGKLPVLLERARVQEEAQVEIAESLEAFPSTLPTRRESAYAAWVSISVGCNNTCTFCIVPALRGKEKDRRPGDILAEIEALVAEGVSEITLLGQNVNAYGSDIGDREAFSKLLRACGRIDGLERVRFTSPHPRDFTDDVIAAMAETPNVMPQLHMPLQSGSDAVLKAMRRSYRQERYLGIIEKVRAAIPHAAISTDIIVGFPGETEEDFEQTLHVVREARFAQAFTFQYSKRPGTPAAEMDGQIPKKVVQERYERLVALQEEISWEENKKQVGRTLELMVAEGEGRKDDTTHRLSGRAPDNRLVHFTKPEQEVRPGDVVTVEITYAAPHHLLAEGPVRDVRRTRAGDAWEKRNAAEAAKPAGVMLGLPKVGVPEPLPAVTGGCAVD.

An MTTase N-terminal domain is found at 14-132; the sequence is RTYEVRTYGC…LPVLLERARV (119 aa). [4Fe-4S] cluster contacts are provided by Cys-23, Cys-61, Cys-95, Cys-169, Cys-173, and Cys-176. Residues 155–386 form the Radical SAM core domain; sequence RESAYAAWVS…ALQEEISWEE (232 aa). The TRAM domain maps to 388–456; the sequence is KKQVGRTLEL…PHHLLAEGPV (69 aa).

This sequence belongs to the methylthiotransferase family. MiaB subfamily. Monomer. [4Fe-4S] cluster is required as a cofactor.

The protein resides in the cytoplasm. It catalyses the reaction N(6)-dimethylallyladenosine(37) in tRNA + (sulfur carrier)-SH + AH2 + 2 S-adenosyl-L-methionine = 2-methylsulfanyl-N(6)-dimethylallyladenosine(37) in tRNA + (sulfur carrier)-H + 5'-deoxyadenosine + L-methionine + A + S-adenosyl-L-homocysteine + 2 H(+). Functionally, catalyzes the methylthiolation of N6-(dimethylallyl)adenosine (i(6)A), leading to the formation of 2-methylthio-N6-(dimethylallyl)adenosine (ms(2)i(6)A) at position 37 in tRNAs that read codons beginning with uridine. This Streptomyces viridosporus (strain ATCC 14672 / DSM 40746 / JCM 4963 / KCTC 9882 / NRRL B-12104 / FH 1290) (Streptomyces ghanaensis) protein is tRNA-2-methylthio-N(6)-dimethylallyladenosine synthase.